Here is a 1996-residue protein sequence, read N- to C-terminus: Protein Shroom3 (1996 aa).

The PDZ domain occupies 25-110 (YIYLEAFLEG…TLRLVVRRDV (86 aa)). The disordered stretch occupies residues 150 to 173 (KHRRSEPAGRPHSWHTTKSGEKQP). S213 carries the post-translational modification Phosphoserine. Disordered stretches follow at residues 340–389 (NGQG…PARS), 437–468 (EKSP…TSIY), 568–629 (DASL…WEGD), 673–772 (RRHS…LQGF), and 788–1053 (FEQR…PESS). 2 positions are modified to phosphoserine: S439 and S443. A compositionally biased stretch (basic and acidic residues) spans 700 to 718 (KAEDPGRKAAPDLGSHLDR). The span at 750 to 768 (HPHTSSLGRRGPGPGSASA) shows a compositional bias: low complexity. Residues 814–823 (TVSTSSTSGN) are compositionally biased toward polar residues. S816 is modified (phosphoserine). 2 stretches are compositionally biased toward basic and acidic residues: residues 826 to 836 (EETKAHIRFSE) and 846 to 859 (QHFK…EEAS). 2 stretches are compositionally biased toward polar residues: residues 862 to 871 (PCGQQLSGGA) and 887 to 896 (RSQSTFQLSS). S890 is subject to Phosphoserine. The span at 897-909 (EPEREPEWRDRPG) shows a compositional bias: basic and acidic residues. S910 and S913 each carry phosphoserine. In terms of domain architecture, ASD1 spans 928 to 1030 (IKDAQSRVLG…SEPEKMNEVG (103 aa)). The segment covering 950 to 964 (APVASRSWRPRPSSA) has biased composition (low complexity). S970 is modified (phosphoserine). Basic and acidic residues predominate over residues 1011 to 1027 (LTPEQKKRSYSEPEKMN). Residues S1069 and S1072 each carry the phosphoserine modification. 4 disordered regions span residues 1093 to 1115 (KTGK…LRER), 1137 to 1223 (SSLS…MSAE), 1315 to 1573 (ECPG…SFNK), and 1627 to 1665 (SLGG…SSED). The segment covering 1137 to 1148 (SSLSSLREPSLQ) has biased composition (low complexity). S1221 carries the post-translational modification Phosphoserine. A compositionally biased stretch (polar residues) spans 1366 to 1375 (YCSQDGQTGR). Basic and acidic residues predominate over residues 1403 to 1417 (CEGDGPEHGVEEGTR). S1441 bears the Phosphoserine mark. Polar residues predominate over residues 1459-1472 (KQQSLPSLCSTSDP). A compositionally biased stretch (basic and acidic residues) spans 1498 to 1515 (PPPHEDYEDEVFVRDPHP). The segment covering 1524 to 1536 (EPLPPPPPPPPSQ) has biased composition (pro residues). Residues 1634–1649 (PIQTQSLSHDPVSGTQ) are compositionally biased toward polar residues. A compositionally biased stretch (basic and acidic residues) spans 1651–1665 (LEKKVSPDPQKSSED). An ASD2 domain is found at 1669-1957 (EALAKEIVHQ…QVKCLLESLP (289 aa)).

The protein belongs to the shroom family. Interacts with F-actin. Interacts with ROCK1.

The protein resides in the cell junction. It localises to the adherens junction. It is found in the cytoplasm. The protein localises to the cytoskeleton. Its subcellular location is the apical cell membrane. Its function is as follows. Controls cell shape changes in the neuroepithelium during neural tube closure. Induces apical constriction in epithelial cells by promoting the apical accumulation of F-actin and myosin II, and probably by bundling stress fibers. Induces apicobasal cell elongation by redistributing gamma-tubulin and directing the assembly of robust apicobasal microtubule arrays. The polypeptide is Protein Shroom3 (SHROOM3) (Homo sapiens (Human)).